Consider the following 260-residue polypeptide: Taurine import ATP-binding protein TauB (260 aa).

Positions 6 to 235 constitute an ABC transporter domain; the sequence is AQQVSVVYAS…RYAHGEPVRS (230 aa). Residue 40-47 coordinates ATP; sequence GASGCGKS.

Belongs to the ABC transporter superfamily. Taurine importer (TC 3.A.1.17.1) family. The complex is composed of two ATP-binding proteins (TauB), two transmembrane proteins (TauC) and a solute-binding protein (TauA).

The protein resides in the cell inner membrane. It carries out the reaction taurine(out) + ATP + H2O = taurine(in) + ADP + phosphate + H(+). Its function is as follows. Part of the ABC transporter complex TauABC involved in taurine import. Responsible for energy coupling to the transport system. The chain is Taurine import ATP-binding protein TauB from Burkholderia pseudomallei (strain K96243).